We begin with the raw amino-acid sequence, 593 residues long: Tyrosine-protein phosphatase non-receptor type 11 (593 aa).

SH2 domains lie at 6–102 (WFHP…KYPL) and 112–216 (WFHG…KQPL). The Tyrosine-protein phosphatase domain maps to 247-521 (FWEEFETLQQ…RFIYMAVQHY (275 aa)). Residues D425, 459-465 (CSAGIGR), and Q506 contribute to the substrate site. Catalysis depends on C459, which acts as the Phosphocysteine intermediate. The segment covering 548–557 (SLSDQTSGDQ) has biased composition (polar residues). The tract at residues 548-575 (SLSDQTSGDQSPLPPCTPTPTCPEMRED) is disordered. The span at 559-568 (PLPPCTPTPT) shows a compositional bias: pro residues.

Belongs to the protein-tyrosine phosphatase family. Non-receptor class 2 subfamily. Post-translationally, phosphorylated by tyrosine-protein kinases. Expressed in embryonic fibroblast, hematopoietic, erythroid, myeloid and lymphoid cells.

The protein localises to the cytoplasm. The catalysed reaction is O-phospho-L-tyrosyl-[protein] + H2O = L-tyrosyl-[protein] + phosphate. Functionally, this PTPase activity may directly link growth factor receptors and other signaling proteins through protein-tyrosine phosphorylation. The SH2 regions may interact with other cellular components to modulate its own phosphatase activity against interacting substrates. May play a positive role during the stages of erythroid cell proliferation. This chain is Tyrosine-protein phosphatase non-receptor type 11 (PTPN11), found in Gallus gallus (Chicken).